Reading from the N-terminus, the 158-residue chain is Small ribosomal subunit protein uS9 (158 aa).

Belongs to the universal ribosomal protein uS9 family.

The sequence is that of Small ribosomal subunit protein uS9 from Brucella melitensis biotype 1 (strain ATCC 23456 / CCUG 17765 / NCTC 10094 / 16M).